The sequence spans 356 residues: uncharacterized protein (356 aa).

This is an uncharacterized protein from Methanocaldococcus jannaschii (strain ATCC 43067 / DSM 2661 / JAL-1 / JCM 10045 / NBRC 100440) (Methanococcus jannaschii).